A 213-amino-acid chain; its full sequence is uncharacterized protein (213 aa).

Positions 1-21 (MKKILFLTVICFCLSSIKAYA) are cleaved as a signal peptide.

This is an uncharacterized protein from Rickettsia prowazekii (strain Madrid E).